Here is a 504-residue protein sequence, read N- to C-terminus: Maturase K (504 aa).

The protein belongs to the intron maturase 2 family. MatK subfamily.

Its subcellular location is the plastid. The protein resides in the chloroplast. Its function is as follows. Usually encoded in the trnK tRNA gene intron. Probably assists in splicing its own and other chloroplast group II introns. The polypeptide is Maturase K (Alliaria petiolata (Garlic mustard)).